The primary structure comprises 230 residues: Demethylmenaquinone methyltransferase (230 aa).

S-adenosyl-L-methionine is bound by residues Thr-62, Asp-80, 100–101 (DG), and Ser-117.

It belongs to the class I-like SAM-binding methyltransferase superfamily. MenG/UbiE family.

The catalysed reaction is a 2-demethylmenaquinol + S-adenosyl-L-methionine = a menaquinol + S-adenosyl-L-homocysteine + H(+). It functions in the pathway quinol/quinone metabolism; menaquinone biosynthesis; menaquinol from 1,4-dihydroxy-2-naphthoate: step 2/2. Methyltransferase required for the conversion of demethylmenaquinol (DMKH2) to menaquinol (MKH2). The chain is Demethylmenaquinone methyltransferase from Corynebacterium glutamicum (strain R).